Consider the following 242-residue polypeptide: Glutamine transport ATP-binding protein GlnQ (242 aa).

Positions Ile-2–Leu-236 constitute an ABC transporter domain. Position 34-41 (Gly-34–Ser-41) interacts with ATP.

It belongs to the ABC transporter superfamily. The complex is composed of two ATP-binding proteins (GlnQ), two transmembrane proteins (GlnM and GlnP) and a solute-binding protein (GlnH).

Its subcellular location is the cell membrane. In terms of biological role, part of the ABC transporter complex GlnHMPQ involved in glutamine transport. Probably responsible for energy coupling to the transport system. In Bacillus subtilis (strain 168), this protein is Glutamine transport ATP-binding protein GlnQ (glnQ).